The following is a 224-amino-acid chain: 2-C-methyl-D-erythritol 4-phosphate cytidylyltransferase (224 aa).

This sequence belongs to the IspD/TarI cytidylyltransferase family. IspD subfamily.

The catalysed reaction is 2-C-methyl-D-erythritol 4-phosphate + CTP + H(+) = 4-CDP-2-C-methyl-D-erythritol + diphosphate. It participates in isoprenoid biosynthesis; isopentenyl diphosphate biosynthesis via DXP pathway; isopentenyl diphosphate from 1-deoxy-D-xylulose 5-phosphate: step 2/6. Catalyzes the formation of 4-diphosphocytidyl-2-C-methyl-D-erythritol from CTP and 2-C-methyl-D-erythritol 4-phosphate (MEP). This is 2-C-methyl-D-erythritol 4-phosphate cytidylyltransferase from Clostridium botulinum (strain Eklund 17B / Type B).